The sequence spans 351 residues: D-alanine--D-alanine ligase (351 aa).

Residues 135-343 (NQIFLQSGQK…MEEVFSDLIE (209 aa)) enclose the ATP-grasp domain. 167–222 (LETLGFPQFLKPVEGGSSVSVYKITNREQLKEKLALIFESDSKVMSQSFLTGIEVS) serves as a coordination point for ATP. Residues Asp-298, Glu-310, and Asn-312 each contribute to the Mg(2+) site.

Belongs to the D-alanine--D-alanine ligase family. Mg(2+) is required as a cofactor. The cofactor is Mn(2+).

It localises to the cytoplasm. It carries out the reaction 2 D-alanine + ATP = D-alanyl-D-alanine + ADP + phosphate + H(+). Its pathway is cell wall biogenesis; peptidoglycan biosynthesis. Its function is as follows. Cell wall formation. The chain is D-alanine--D-alanine ligase from Leptospira interrogans serogroup Icterohaemorrhagiae serovar copenhageni (strain Fiocruz L1-130).